A 200-amino-acid chain; its full sequence is Transcription elongation factor A protein-like 5 (200 aa).

Basic and acidic residues-rich tracts occupy residues 1-49 (MEKF…KLEV), 61-85 (GEGK…KPDS), 94-106 (RAAE…DYVP), 114-153 (DRGT…EELR), and 190-200 (GQKDLEDAPFV). The interval 1–200 (MEKFYKENEG…QKDLEDAPFV (200 aa)) is disordered.

This sequence belongs to the TFS-II family. TFA subfamily.

It is found in the nucleus. In terms of biological role, may be involved in transcriptional regulation. This chain is Transcription elongation factor A protein-like 5 (Tceal5), found in Mus musculus (Mouse).